Consider the following 170-residue polypeptide: Adenine phosphoribosyltransferase (170 aa).

It belongs to the purine/pyrimidine phosphoribosyltransferase family. In terms of assembly, homodimer.

It is found in the cytoplasm. It carries out the reaction AMP + diphosphate = 5-phospho-alpha-D-ribose 1-diphosphate + adenine. Its pathway is purine metabolism; AMP biosynthesis via salvage pathway; AMP from adenine: step 1/1. Catalyzes a salvage reaction resulting in the formation of AMP, that is energically less costly than de novo synthesis. This chain is Adenine phosphoribosyltransferase, found in Bacillus subtilis (strain 168).